The primary structure comprises 478 residues: Ninja-family protein 7 (478 aa).

Disordered regions lie at residues 1 to 247 (MDDD…LTPG), 336 to 374 (SFTA…EKKA), and 454 to 478 (DAPA…SAEN). The span at 23 to 35 (KARDAPLEPKAEP) shows a compositional bias: basic and acidic residues. Polar residues predominate over residues 169–179 (ISISTDDGSTG). Residues 180–189 (ENEDVAESEA) show a composition bias toward acidic residues. A compositionally biased stretch (low complexity) spans 233–242 (SFSGSESSSG). Residues 339-359 (AKDKADQTGTKQVDDGKKPRE) show a composition bias toward basic and acidic residues.

It belongs to the Ninja family.

The protein resides in the nucleus. The polypeptide is Ninja-family protein 7 (Zea mays (Maize)).